We begin with the raw amino-acid sequence, 201 residues long: ATP-dependent Clp protease proteolytic subunit (201 aa).

The active-site Nucleophile is the serine 100. Histidine 125 is a catalytic residue.

Belongs to the peptidase S14 family. Component of the chloroplastic Clp protease core complex.

It is found in the plastid. The protein localises to the chloroplast stroma. The enzyme catalyses Hydrolysis of proteins to small peptides in the presence of ATP and magnesium. alpha-casein is the usual test substrate. In the absence of ATP, only oligopeptides shorter than five residues are hydrolyzed (such as succinyl-Leu-Tyr-|-NHMec, and Leu-Tyr-Leu-|-Tyr-Trp, in which cleavage of the -Tyr-|-Leu- and -Tyr-|-Trp bonds also occurs).. Cleaves peptides in various proteins in a process that requires ATP hydrolysis. Has a chymotrypsin-like activity. Plays a major role in the degradation of misfolded proteins. The polypeptide is ATP-dependent Clp protease proteolytic subunit (Chloranthus spicatus (Chulantree)).